Reading from the N-terminus, the 98-residue chain is Large ribosomal subunit protein uL23 (98 aa).

This sequence belongs to the universal ribosomal protein uL23 family. In terms of assembly, part of the 50S ribosomal subunit. Contacts protein L29, and trigger factor when it is bound to the ribosome.

Functionally, one of the early assembly proteins it binds 23S rRNA. One of the proteins that surrounds the polypeptide exit tunnel on the outside of the ribosome. Forms the main docking site for trigger factor binding to the ribosome. The chain is Large ribosomal subunit protein uL23 from Rickettsia canadensis (strain McKiel).